We begin with the raw amino-acid sequence, 348 residues long: Dihydroorotate dehydrogenase (quinone) (348 aa).

FMN-binding positions include 65 to 69 and T89; that span reads AGLDK. K69 contributes to the substrate binding site. 114 to 118 is a substrate binding site; sequence NRLGF. FMN-binding residues include N147 and N180. Residue N180 coordinates substrate. S183 serves as the catalytic Nucleophile. N185 is a substrate binding site. Residues K225 and T253 each coordinate FMN. Residue 254–255 participates in substrate binding; it reads NT. Residues G276, G305, and 326–327 contribute to the FMN site; that span reads YS.

This sequence belongs to the dihydroorotate dehydrogenase family. Type 2 subfamily. Monomer. FMN serves as cofactor.

Its subcellular location is the cell membrane. The enzyme catalyses (S)-dihydroorotate + a quinone = orotate + a quinol. Its pathway is pyrimidine metabolism; UMP biosynthesis via de novo pathway; orotate from (S)-dihydroorotate (quinone route): step 1/1. Its function is as follows. Catalyzes the conversion of dihydroorotate to orotate with quinone as electron acceptor. This Delftia acidovorans (strain DSM 14801 / SPH-1) protein is Dihydroorotate dehydrogenase (quinone).